We begin with the raw amino-acid sequence, 309 residues long: MPIKVPNDLPAATVLENENMFVMRENRAASQDIRPLDLLILNLMPTKVETEIQIMRLLSNSPLQVNVRLLQMSSHVSKNTSQEYLDRFYDRFDDVKSRKWDGMIITGAPVENIDFEEVDYWDELCQIMEWSKKNVFSTLHICWGAQAGLNYHYGIPKYPLESKMSGVFAHKAIVRDDPLLRGCDDIFWFPHSRHTEVRAEDIIRNPHLHIIAVSDEAGVGIVVSENSGQVFVTGHMEYDAKTLSYEYYRDLGKGMNPHIPYHYFPDDDPSKDPVMNWRSTANLIFTNWLNYYVYQRVPYDINEIGKDSE.

Cys-142 functions as the Acyl-thioester intermediate in the catalytic mechanism. Positions 163 and 192 each coordinate substrate. Residue His-235 is the Proton acceptor of the active site. Residue Glu-237 is part of the active site. Arg-249 serves as a coordination point for substrate.

It belongs to the MetA family.

The protein resides in the cytoplasm. It carries out the reaction L-homoserine + acetyl-CoA = O-acetyl-L-homoserine + CoA. Its pathway is amino-acid biosynthesis; L-methionine biosynthesis via de novo pathway; O-acetyl-L-homoserine from L-homoserine: step 1/1. In terms of biological role, transfers an acetyl group from acetyl-CoA to L-homoserine, forming acetyl-L-homoserine. In Methanomethylophilus alvi (strain Mx1201), this protein is Homoserine O-acetyltransferase.